We begin with the raw amino-acid sequence, 397 residues long: Ribosomal RNA large subunit methyltransferase I (397 aa).

The PUA domain occupies 2 to 79 (TAAIYLVKGR…KEEINKAFFV (78 aa)).

This sequence belongs to the methyltransferase superfamily. RlmI family.

It localises to the cytoplasm. The catalysed reaction is cytidine(1962) in 23S rRNA + S-adenosyl-L-methionine = 5-methylcytidine(1962) in 23S rRNA + S-adenosyl-L-homocysteine + H(+). Specifically methylates the cytosine at position 1962 (m5C1962) of 23S rRNA. The sequence is that of Ribosomal RNA large subunit methyltransferase I from Vibrio campbellii (strain ATCC BAA-1116).